A 424-amino-acid chain; its full sequence is N-succinylarginine dihydrolase (424 aa).

Substrate is bound by residues 19–28 (AGLSPGNIAS), N110, and 137–138 (HR). E174 is an active-site residue. Residue R207 coordinates substrate. H240 is a catalytic residue. Positions 242 and 349 each coordinate substrate. C355 functions as the Nucleophile in the catalytic mechanism.

It belongs to the succinylarginine dihydrolase family. As to quaternary structure, homodimer.

It carries out the reaction N(2)-succinyl-L-arginine + 2 H2O + 2 H(+) = N(2)-succinyl-L-ornithine + 2 NH4(+) + CO2. It functions in the pathway amino-acid degradation; L-arginine degradation via AST pathway; L-glutamate and succinate from L-arginine: step 2/5. Its function is as follows. Catalyzes the hydrolysis of N(2)-succinylarginine into N(2)-succinylornithine, ammonia and CO(2). The sequence is that of N-succinylarginine dihydrolase from Rhizorhabdus wittichii (strain DSM 6014 / CCUG 31198 / JCM 15750 / NBRC 105917 / EY 4224 / RW1) (Sphingomonas wittichii).